Here is a 197-residue protein sequence, read N- to C-terminus: HTH-type transcriptional regulator BetI (197 aa).

Residues 8–68 (PIRRQQLIEA…ATMRYLMNAL (61 aa)) enclose the HTH tetR-type domain. Residues 31-50 (SIALIARLAGVSNGIISHYF) constitute a DNA-binding region (H-T-H motif).

It participates in amine and polyamine biosynthesis; betaine biosynthesis via choline pathway [regulation]. In terms of biological role, repressor involved in the biosynthesis of the osmoprotectant glycine betaine. It represses transcription of the choline transporter BetT and the genes of BetAB involved in the synthesis of glycine betaine. The polypeptide is HTH-type transcriptional regulator BetI (Pseudomonas fluorescens (strain SBW25)).